The primary structure comprises 337 residues: Trace amine-associated receptor 5 (337 aa).

Residues Met-1–Tyr-38 are Extracellular-facing. An N-linked (GlcNAc...) asparagine glycan is attached at Asn-21. Intrachain disulfides connect Cys-24-Cys-188 and Cys-99-Cys-192. Residues Leu-39–Val-59 traverse the membrane as a helical segment. The Cytoplasmic segment spans residues Ser-60–Asn-70. Residues Phe-71 to Ser-91 traverse the membrane as a helical segment. Residues Thr-92 to Leu-109 are Extracellular-facing. Residues His-110 to Ile-130 traverse the membrane as a helical segment. Residues Asp-131–Tyr-154 lie on the Cytoplasmic side of the membrane. A helical membrane pass occupies residues Ile-155–Val-175. Residues Glu-176–Val-189 are extracellular Loop 2 (ECL2). The Extracellular portion of the chain corresponds to Glu-176–Asn-204. Residues Phe-205 to Val-225 form a helical membrane-spanning segment. Residues Ala-226–Thr-253 are Cytoplasmic-facing. The helical transmembrane segment at Leu-254–Val-274 threads the bilayer. The Extracellular segment spans residues Asp-275–Pro-284. The chain crosses the membrane as a helical span at residues Leu-285–Phe-307. Residues Ser-308 to Asp-337 lie on the Cytoplasmic side of the membrane.

The protein belongs to the G-protein coupled receptor 1 family. In terms of tissue distribution, specifically expressed in neurons of the olfactory epithelium, to discrete glomeruli predominantly localized to a confined bulb region. Present in the dorsal area of the main olfactory epithelium. Also present in the limbic brain areas receiving projection from the olfactory system and involved in the regulation of emotions. Also expressed in some brain regions outside the olfactory epithelium, such as the hippocampus, cerebellum, cortex, raphe nuclei, hypothalamus, and habenula.

Its subcellular location is the cell membrane. Its activity is regulated as follows. Inhibited by 1-[(5,5- diphenyloxolan-2-yl)methyl]-4-(2-methoxyphenyl)piperazine and N-[(2,2-diphenyl-1,3-dioxolan-4-yl)methyl]-2-(2- methoxyphenoxy)ethan-1-amine small molecules. In terms of biological role, olfactory receptor specific for trimethylamine, a trace amine enriched in the urine of male mice, playing a role in social behavior. Also activated by N-methylpiperidine. Trimethylamine is present at high concentration in the urine of male mice after puberty and acts as an attractant. Trimethylamine-binding causes a conformation change that triggers signaling via G(s)-class of G alpha proteins (GNAL or GNAS). Also required to provide olfactory input into limbic brain areas to regulate emotional behaviors likely via modulation of the serotonin system. This is Trace amine-associated receptor 5 from Mus musculus (Mouse).